Here is an 86-residue protein sequence, read N- to C-terminus: Exodeoxyribonuclease 7 small subunit (86 aa).

The segment at 1–26 (MQDELFETEKAPQKNAKNAKNAPKKS) is disordered.

It belongs to the XseB family. In terms of assembly, heterooligomer composed of large and small subunits.

The protein resides in the cytoplasm. The catalysed reaction is Exonucleolytic cleavage in either 5'- to 3'- or 3'- to 5'-direction to yield nucleoside 5'-phosphates.. In terms of biological role, bidirectionally degrades single-stranded DNA into large acid-insoluble oligonucleotides, which are then degraded further into small acid-soluble oligonucleotides. The chain is Exodeoxyribonuclease 7 small subunit from Helicobacter pylori (strain J99 / ATCC 700824) (Campylobacter pylori J99).